The sequence spans 466 residues: Histidine--tRNA ligase (466 aa).

Belongs to the class-II aminoacyl-tRNA synthetase family. In terms of assembly, homodimer.

It is found in the cytoplasm. It carries out the reaction tRNA(His) + L-histidine + ATP = L-histidyl-tRNA(His) + AMP + diphosphate + H(+). This Xylella fastidiosa (strain M23) protein is Histidine--tRNA ligase.